The sequence spans 308 residues: Aspartate carbamoyltransferase catalytic subunit (308 aa).

Carbamoyl phosphate-binding residues include Arg50 and Thr51. Lys78 contacts L-aspartate. Positions 100, 131, and 134 each coordinate carbamoyl phosphate. Arg164 and Arg216 together coordinate L-aspartate. Residues Ala259 and Pro260 each coordinate carbamoyl phosphate.

This sequence belongs to the aspartate/ornithine carbamoyltransferase superfamily. ATCase family. In terms of assembly, heterododecamer (2C3:3R2) of six catalytic PyrB chains organized as two trimers (C3), and six regulatory PyrI chains organized as three dimers (R2).

It carries out the reaction carbamoyl phosphate + L-aspartate = N-carbamoyl-L-aspartate + phosphate + H(+). The protein operates within pyrimidine metabolism; UMP biosynthesis via de novo pathway; (S)-dihydroorotate from bicarbonate: step 2/3. In terms of biological role, catalyzes the condensation of carbamoyl phosphate and aspartate to form carbamoyl aspartate and inorganic phosphate, the committed step in the de novo pyrimidine nucleotide biosynthesis pathway. The sequence is that of Aspartate carbamoyltransferase catalytic subunit from Oenococcus oeni (strain ATCC BAA-331 / PSU-1).